The chain runs to 161 residues: uncharacterized protein (161 aa).

The stretch at 1 to 29 (MTLYDTVKELQEKLRNGEIEINTFLERLG) forms a coiled coil.

This is an uncharacterized protein from Acidianus convivator (ATV).